We begin with the raw amino-acid sequence, 422 residues long: UDP-N-acetylglucosamine 1-carboxyvinyltransferase (422 aa).

22–23 (KN) serves as a coordination point for phosphoenolpyruvate. Residue arginine 93 coordinates UDP-N-acetyl-alpha-D-glucosamine. Residue cysteine 117 is the Proton donor of the active site. Cysteine 117 is modified (2-(S-cysteinyl)pyruvic acid O-phosphothioketal). Residues 122 to 126 (RPVDL), aspartate 308, and leucine 330 each bind UDP-N-acetyl-alpha-D-glucosamine.

It belongs to the EPSP synthase family. MurA subfamily.

Its subcellular location is the cytoplasm. It carries out the reaction phosphoenolpyruvate + UDP-N-acetyl-alpha-D-glucosamine = UDP-N-acetyl-3-O-(1-carboxyvinyl)-alpha-D-glucosamine + phosphate. Its pathway is cell wall biogenesis; peptidoglycan biosynthesis. In terms of biological role, cell wall formation. Adds enolpyruvyl to UDP-N-acetylglucosamine. This Helicobacter pylori (strain J99 / ATCC 700824) (Campylobacter pylori J99) protein is UDP-N-acetylglucosamine 1-carboxyvinyltransferase.